A 244-amino-acid polypeptide reads, in one-letter code: Ribonuclease P protein component 3 (244 aa).

It belongs to the eukaryotic/archaeal RNase P protein component 3 family. In terms of assembly, consists of a catalytic RNA component and at least 4-5 protein subunits.

It localises to the cytoplasm. The enzyme catalyses Endonucleolytic cleavage of RNA, removing 5'-extranucleotides from tRNA precursor.. Part of ribonuclease P, a protein complex that generates mature tRNA molecules by cleaving their 5'-ends. This chain is Ribonuclease P protein component 3, found in Methanopyrus kandleri (strain AV19 / DSM 6324 / JCM 9639 / NBRC 100938).